The following is a 321-amino-acid chain: Replication factor C small subunit (321 aa).

46-53 is an ATP binding site; that stretch reads GPAGVGKT.

It belongs to the activator 1 small subunits family. RfcS subfamily. In terms of assembly, heterohexamer composed of four small subunits (RfcS) and two large subunits (RfcL).

Part of the RFC clamp loader complex which loads the PCNA sliding clamp onto DNA. The complex possesses DNA-dependent ATPase activity which is further stimulated by PCNA. In conjunction with PCNA stimulates DNA synthesis by PolB, relieving inhibition by replication protein A (RPA). The sequence is that of Replication factor C small subunit (rfcS) from Methanothermobacter thermautotrophicus (strain ATCC 29096 / DSM 1053 / JCM 10044 / NBRC 100330 / Delta H) (Methanobacterium thermoautotrophicum).